A 482-amino-acid polypeptide reads, in one-letter code: tRNA sulfurtransferase (482 aa).

One can recognise a THUMP domain in the interval 61–165 (LAIRDALTRI…DDRLLLIKGR (105 aa)). ATP contacts are provided by residues 183–184 (LI), lysine 265, glycine 287, and glutamine 296. Cysteine 344 and cysteine 456 are disulfide-bonded. Residues 404 to 482 (FGPNDVILDI…GFQNVKVYRP (79 aa)) enclose the Rhodanese domain. Cysteine 456 acts as the Cysteine persulfide intermediate in catalysis.

The protein belongs to the ThiI family.

The protein resides in the cytoplasm. It carries out the reaction [ThiI sulfur-carrier protein]-S-sulfanyl-L-cysteine + a uridine in tRNA + 2 reduced [2Fe-2S]-[ferredoxin] + ATP + H(+) = [ThiI sulfur-carrier protein]-L-cysteine + a 4-thiouridine in tRNA + 2 oxidized [2Fe-2S]-[ferredoxin] + AMP + diphosphate. It catalyses the reaction [ThiS sulfur-carrier protein]-C-terminal Gly-Gly-AMP + S-sulfanyl-L-cysteinyl-[cysteine desulfurase] + AH2 = [ThiS sulfur-carrier protein]-C-terminal-Gly-aminoethanethioate + L-cysteinyl-[cysteine desulfurase] + A + AMP + 2 H(+). It participates in cofactor biosynthesis; thiamine diphosphate biosynthesis. Its function is as follows. Catalyzes the ATP-dependent transfer of a sulfur to tRNA to produce 4-thiouridine in position 8 of tRNAs, which functions as a near-UV photosensor. Also catalyzes the transfer of sulfur to the sulfur carrier protein ThiS, forming ThiS-thiocarboxylate. This is a step in the synthesis of thiazole, in the thiamine biosynthesis pathway. The sulfur is donated as persulfide by IscS. This is tRNA sulfurtransferase from Citrobacter koseri (strain ATCC BAA-895 / CDC 4225-83 / SGSC4696).